A 485-amino-acid polypeptide reads, in one-letter code: Inosine-5'-monophosphate dehydrogenase (485 aa).

CBS domains follow at residues 99–154 (IVED…TVKE) and 156–212 (MTRE…KNAV). NAD(+)-binding positions include D247 and 294 to 296 (GIG). K(+)-binding residues include G296 and G298. An IMP-binding site is contributed by S299. C301 contacts K(+). The active-site Thioimidate intermediate is the C301. IMP-binding positions include 334-336 (DGG), 357-358 (GN), and 381-385 (YRGMG). The active-site Proton acceptor is R397. E412 provides a ligand contact to IMP. K(+) is bound by residues E466, S467, and H468.

The protein belongs to the IMPDH/GMPR family. Homotetramer. The cofactor is K(+).

The enzyme catalyses IMP + NAD(+) + H2O = XMP + NADH + H(+). Its pathway is purine metabolism; XMP biosynthesis via de novo pathway; XMP from IMP: step 1/1. Mycophenolic acid (MPA) is a non-competitive inhibitor that prevents formation of the closed enzyme conformation by binding to the same site as the amobile flap. In contrast, mizoribine monophosphate (MZP) is a competitive inhibitor that induces the closed conformation. MPA is a potent inhibitor of mammalian IMPDHs but a poor inhibitor of the bacterial enzymes. MZP is a more potent inhibitor of bacterial IMPDH. In terms of biological role, catalyzes the conversion of inosine 5'-phosphate (IMP) to xanthosine 5'-phosphate (XMP), the first committed and rate-limiting step in the de novo synthesis of guanine nucleotides, and therefore plays an important role in the regulation of cell growth. The protein is Inosine-5'-monophosphate dehydrogenase of Pyrococcus furiosus (strain ATCC 43587 / DSM 3638 / JCM 8422 / Vc1).